Reading from the N-terminus, the 455-residue chain is MLNSAMSVVILAAGKGTRMYSDIPKVLHTLAGKAMVQHVIDAANELGASQVHLVYGHGGDLLKQTLKNDNLNWVLQAEQLGTGHAMQQAAPFFGDDENILMLYGDVPLISVETLQRLRDAKPQGGIGLLTVKLDDPSGYGRITRVNGKVTGIVEHKDATDEQRQIKEINTGILIANGADMKRWLSKLTNNNAQGEYYITDIIALAYQEGREIAAVHPARISETEGVNNRLQLSRLERIYQAEQAEKLLLAGVMLRDPARFDLRGNLAHGRDVEIDTNVIIEGNVTLGHRVKIGTGCIIKNSVIGDDCEISPYSVVEDARLDPACTIGPFARLRPGAELLAGAHVGNFVEMKKARLGKGSKAGHLTYLGDADIGDNVNIGAGTITCNYDGANKFKTIIGDDVFVGSDTQLVAPVTVGKGATIAAGTTVTRNVADNELVLSRVPQVHKQGWQRPVKK.

Positions 1–229 (MLNSAMSVVI…ISETEGVNNR (229 aa)) are pyrophosphorylase. UDP-N-acetyl-alpha-D-glucosamine is bound by residues 11-14 (LAAG), Lys25, Gln76, 81-82 (GT), 103-105 (YGD), Gly140, Glu154, Asn169, and Asn227. Position 105 (Asp105) interacts with Mg(2+). Mg(2+) is bound at residue Asn227. The interval 230-250 (LQLSRLERIYQAEQAEKLLLA) is linker. The N-acetyltransferase stretch occupies residues 251 to 455 (GVMLRDPARF…KQGWQRPVKK (205 aa)). Positions 333 and 351 each coordinate UDP-N-acetyl-alpha-D-glucosamine. His363 serves as the catalytic Proton acceptor. Tyr366 and Asn377 together coordinate UDP-N-acetyl-alpha-D-glucosamine. Acetyl-CoA-binding positions include Ala380, 386-387 (NY), Ser405, Ala423, and Arg440.

In the N-terminal section; belongs to the N-acetylglucosamine-1-phosphate uridyltransferase family. The protein in the C-terminal section; belongs to the transferase hexapeptide repeat family. As to quaternary structure, homotrimer. Requires Mg(2+) as cofactor.

The protein resides in the cytoplasm. The catalysed reaction is alpha-D-glucosamine 1-phosphate + acetyl-CoA = N-acetyl-alpha-D-glucosamine 1-phosphate + CoA + H(+). It catalyses the reaction N-acetyl-alpha-D-glucosamine 1-phosphate + UTP + H(+) = UDP-N-acetyl-alpha-D-glucosamine + diphosphate. The protein operates within nucleotide-sugar biosynthesis; UDP-N-acetyl-alpha-D-glucosamine biosynthesis; N-acetyl-alpha-D-glucosamine 1-phosphate from alpha-D-glucosamine 6-phosphate (route II): step 2/2. Its pathway is nucleotide-sugar biosynthesis; UDP-N-acetyl-alpha-D-glucosamine biosynthesis; UDP-N-acetyl-alpha-D-glucosamine from N-acetyl-alpha-D-glucosamine 1-phosphate: step 1/1. It participates in bacterial outer membrane biogenesis; LPS lipid A biosynthesis. Functionally, catalyzes the last two sequential reactions in the de novo biosynthetic pathway for UDP-N-acetylglucosamine (UDP-GlcNAc). The C-terminal domain catalyzes the transfer of acetyl group from acetyl coenzyme A to glucosamine-1-phosphate (GlcN-1-P) to produce N-acetylglucosamine-1-phosphate (GlcNAc-1-P), which is converted into UDP-GlcNAc by the transfer of uridine 5-monophosphate (from uridine 5-triphosphate), a reaction catalyzed by the N-terminal domain. This is Bifunctional protein GlmU from Salmonella arizonae (strain ATCC BAA-731 / CDC346-86 / RSK2980).